We begin with the raw amino-acid sequence, 172 residues long: Centrin-2 (172 aa).

A disordered region spans residues 1–31 (MASNFKKANMASTTQRKRMSPKPELTEEQKQ). Residue Ala-2 is modified to N-acetylalanine. Positions 2 to 25 (ASNFKKANMASTTQRKRMSPKPEL) are required for self-assembly. At Ser-20 the chain carries Phosphoserine. Residue Lys-22 forms a Glycyl lysine isopeptide (Lys-Gly) (interchain with G-Cter in SUMO2) linkage. At Thr-26 the chain carries Phosphothreonine. EF-hand domains are found at residues 28–63 (EQKQEIREAFDLFDADGTGTIDVKELKVAMRALGFE), 64–99 (PKKEEIKKMISEIDKEGTGKMNFSDFLTVMTQKMSE), 101–136 (DTKEEILKAFKLFDDDETGKISFKNLKRVAKELGEN), and 137–172 (LSDEELQEMIDEADRDGDGEVNEQEFLRIMKKTSLY). Asp-41, Asp-43, Thr-45, Thr-47, and Glu-52 together coordinate Ca(2+). 5 residues coordinate Ca(2+): Asp-150, Asp-152, Asp-154, Glu-156, and Glu-161.

Belongs to the centrin family. In terms of assembly, monomer. Homooligomer. Interacts with CCP110, SFI1. Component of the XPC complex composed of XPC, RAD23B and CETN2. Component of the nuclear pore complex (NPC)-associated TREX-2 complex (transcription and export complex 2), composed of at least GANP, 2 copies of ENY2, PCID2, SEM1/DSS1, and either centrin CETN2 or centrin CETN3. The TREX-2 complex also associates with ALYREF/ALY and with the nucleoporin NUP153. Interacts with USP49. Forms a microtubule-associated complex with POC5, POC1B and FAM161A. Interacts with CCDC15.

It is found in the cytoplasm. The protein resides in the cytoskeleton. It localises to the microtubule organizing center. The protein localises to the centrosome. Its subcellular location is the centriole. It is found in the nucleus. The protein resides in the nucleus envelope. It localises to the nuclear pore complex. In terms of biological role, plays a fundamental role in microtubule organizing center structure and function. Required for centriole duplication and correct spindle formation. Has a role in regulating cytokinesis and genome stability via cooperation with CALM1 and CCP110. Involved in global genome nucleotide excision repair (GG-NER) by acting as component of the XPC complex. Cooperatively with RAD23B appears to stabilize XPC. In vitro, stimulates DNA binding of the XPC:RAD23B dimer. Its function is as follows. The XPC complex is proposed to represent the first factor bound at the sites of DNA damage and together with other core recognition factors, XPA, RPA and the TFIIH complex, is part of the pre-incision (or initial recognition) complex. The XPC complex recognizes a wide spectrum of damaged DNA characterized by distortions of the DNA helix such as single-stranded loops, mismatched bubbles or single-stranded overhangs. The orientation of XPC complex binding appears to be crucial for inducing a productive NER. XPC complex is proposed to recognize and to interact with unpaired bases on the undamaged DNA strand which is followed by recruitment of the TFIIH complex and subsequent scanning for lesions in the opposite strand in a 5'-to-3' direction by the NER machinery. Cyclobutane pyrimidine dimers (CPDs) which are formed upon UV-induced DNA damage esacpe detection by the XPC complex due to a low degree of structural perurbation. Instead they are detected by the UV-DDB complex which in turn recruits and cooperates with the XPC complex in the respective DNA repair. Functionally, as a component of the TREX-2 complex, involved in the export of mRNAs to the cytoplasm through the nuclear pores. The sequence is that of Centrin-2 (CETN2) from Bos taurus (Bovine).